Reading from the N-terminus, the 205-residue chain is MQPDLSPQLAMVLNYIRHFIDINGYPPSIRDICKATGLRSSSTVYNYLNKLEEKGYIRRDPSRSRAIEILTPYPALTRAKNMVSVPLLGKITAGQPILAFENIEDVFPLPADLAGAENAFMLHVSGDSMIEAGILDGDYLIVRPQDTAENGDIVVALLEDEATVKYFYRYPDHIELVPANSSMQPLIVHKVTILGKVVGLYRHFS.

Positions 29–49 (IRDICKATGLRSSSTVYNYLN) form a DNA-binding region, H-T-H motif. Catalysis depends on for autocatalytic cleavage activity residues Ser128 and Lys165.

It belongs to the peptidase S24 family. As to quaternary structure, homodimer.

It carries out the reaction Hydrolysis of Ala-|-Gly bond in repressor LexA.. Its function is as follows. Represses a number of genes involved in the response to DNA damage (SOS response), including recA and lexA. In the presence of single-stranded DNA, RecA interacts with LexA causing an autocatalytic cleavage which disrupts the DNA-binding part of LexA, leading to derepression of the SOS regulon and eventually DNA repair. In Moorella thermoacetica (strain ATCC 39073 / JCM 9320), this protein is LexA repressor.